Here is a 103-residue protein sequence, read N- to C-terminus: L-rhamnose-binding lectin ELEL-1 (103 aa).

The SUEL-type lectin domain occupies 13–102; that stretch reads VCEGSSLTIS…KYLELSYDCS (90 aa). Cystine bridges form between cysteine 14–cysteine 45, cysteine 23–cysteine 101, cysteine 56–cysteine 88, and cysteine 69–cysteine 75.

As to quaternary structure, homodimer; disulfide-linked. In terms of processing, not glycosylated.

In terms of biological role, rhamnose-binding lectin. Also binds alpha-D-melibiose, alpha-D-lactose, beta-D-lactose, methyl-alpha-D-galactopyranoside, methyl-beta-D--galactopyranoside and D-galactose but not D-arabinose, L-fucose, D-glucose, D-mannose, D-maltose, D-sucrose, N-acetyl-D-galactosamine, N-acetyl-D-glucosamine, N-acetyl-D-mannosamine-D-xylose or by glycoproteins orosomucoid, thyroglobulin, ovomucoid and porcine stomach mucin. Shows cation-independent hemagglutinating activity against rabbit and human erythrocytes. Agglutinates cells of Gram-positive bacterial species S.aureus but not those of Gram-negative E.coli. This chain is L-rhamnose-binding lectin ELEL-1, found in Echinometra lucunter (Rock-boring urchin).